The chain runs to 279 residues: Movement protein (279 aa).

The protein belongs to the cucumovirus movement protein family.

It is found in the host cell junction. The protein resides in the host plasmodesma. In terms of biological role, transports viral genome to neighboring plant cells directly through plasmosdesmata, without any budding. The movement protein allows efficient cell to cell propagation, by bypassing the host cell wall barrier. Acts by forming a tubular structure at the host plasmodesmata, enlarging it enough to allow free passage of virion capsids. The protein is Movement protein of Cucumber mosaic virus (strain Kin) (CMV).